The following is a 457-amino-acid chain: Streptogrisin-C (457 aa).

The tat-type signal signal peptide spans 1–34 (MERTTLRRRALVAGTATVAVGALALAGLTGVASA). Residues 35–202 (DPAATAAPPV…ARSAEQPRAL (168 aa)) constitute a propeptide that is removed on maturation. Residues 203–393 (ADIRGGDAYY…QAYGLTLVTS (191 aa)) are catalytic. Residues cysteine 219 and cysteine 239 are joined by a disulfide bond. Residues histidine 238 and aspartate 266 each act as charge relay system in the active site. 2 disulfides stabilise this stretch: cysteine 305-cysteine 315 and cysteine 341-cysteine 368. Serine 347 (charge relay system) is an active-site residue. Positions 393–412 (SGGGTPTDPPTTPPTDSPGG) are disordered. Positions 394-413 (GGGTPTDPPTTPPTDSPGGT) are linker. The segment covering 399 to 408 (TDPPTTPPTD) has biased composition (pro residues). The 43-residue stretch at 415-457 (AVGTAYAAGATVTYGGATYRCLQAHTAQPGWTPADVPALWQRV) folds into the Chitin-binding type-3 domain.

It belongs to the peptidase S1 family. Monomer. In terms of processing, predicted to be exported by the Tat system. The position of the signal peptide cleavage has not been experimentally proven.

Functionally, hydrolysis of proteins with specificity similar to chymotrypsin. May be specialized for the degradation of chitin-linked proteins. Has a primary specificity for large aliphatic or aromatic amino acids. The chain is Streptogrisin-C (sprC) from Streptomyces griseus.